A 486-amino-acid chain; its full sequence is MVQLNQNFIDTITQELPAHLSMDEFIAACDKPLRRSIRVNTLKISSDDFKTLMQPKGWTFDPIPWCEDGFWISYDEEEQLGNALEHIQGLFYIQEASSMLPPTALFTPSAFTTSAKWQCVLDLASAPGSKTTQMAALMQNQGLLVANEYSASRVKVLHANVLRMGASHCALTHFDGRVFGEYLYESFDAVLIDAPCGGEGTVRKDADALKHWSLDDVLAISETQKALIESAFLALKPGGSLVYSTCTLNRLENQGVCEYLKQVYGDAVQFESLSDLFDGADRATTAEGFLHVWPQIYDSEGFFVAKLTKTASVPRLLPEPKLQKNFPFTTASAKQAQGIKDYFQQDLGISLPDELIMVRDDEFWLFPHEFNAFIGRMRFQRIGIKLADNSKHGFKVRHEAIIALAGKQLSPTAKTVDVSDVEAKEYLMGRDIPLATAGKAQGEVIVCYGGAPLGMAKHLGNKLKNNLPRDLVKDKVLLLPEQTKSL.

Residues 124 to 130 (ASAPGSK), Glu-148, Asp-175, and Asp-193 each bind S-adenosyl-L-methionine. The active-site Nucleophile is Cys-246.

It belongs to the class I-like SAM-binding methyltransferase superfamily. RsmB/NOP family.

The protein resides in the cytoplasm. It catalyses the reaction cytidine(1407) in 16S rRNA + S-adenosyl-L-methionine = 5-methylcytidine(1407) in 16S rRNA + S-adenosyl-L-homocysteine + H(+). Specifically methylates the cytosine at position 1407 (m5C1407) of 16S rRNA. The polypeptide is Ribosomal RNA small subunit methyltransferase F (Shewanella baltica (strain OS155 / ATCC BAA-1091)).